The chain runs to 311 residues: Bifunctional protein FolD (311 aa).

Residue 174 to 176 (GKG) coordinates NADP(+).

Belongs to the tetrahydrofolate dehydrogenase/cyclohydrolase family. Homodimer.

It carries out the reaction (6R)-5,10-methylene-5,6,7,8-tetrahydrofolate + NADP(+) = (6R)-5,10-methenyltetrahydrofolate + NADPH. The catalysed reaction is (6R)-5,10-methenyltetrahydrofolate + H2O = (6R)-10-formyltetrahydrofolate + H(+). It participates in one-carbon metabolism; tetrahydrofolate interconversion. In terms of biological role, catalyzes the oxidation of 5,10-methylenetetrahydrofolate to 5,10-methenyltetrahydrofolate and then the hydrolysis of 5,10-methenyltetrahydrofolate to 10-formyltetrahydrofolate. This is Bifunctional protein FolD from Pyrobaculum aerophilum (strain ATCC 51768 / DSM 7523 / JCM 9630 / CIP 104966 / NBRC 100827 / IM2).